A 369-amino-acid chain; its full sequence is MKNAYYIGLMSGTSMDGVDAVLVDFSGAQPQLIASHTEAIPSHLLKGLQRLCLPSTDEINRLGRLDRNVGQLFALAVNNLLSKCTIAKEEVIAIGSHGQTVRHMPNLEVGFTLQIGDPNTIATETGIDVIADFRRKDIALGGQGAPLVPAFHQQTFAEVGKKRIILNIGGIANITYLPGNSDQVLGFDTGPGNTLVDAWIQQVKSEPFDRDGEWAASGKTDQGLLMQLLSHPYFSLAYPKSTGRELFNQAWLEQQLSPFNHLDEEDIQSTLLDLTCHSIAQDIIKLSNEGELFVCGGGAFNGQLMQRLAALLPGYKLDTTSALGVDPKWAEGIAFAWLAMRNHLGLPANLPAVTGASREAVLGGRFSAK.

Gly-12–Asp-19 contacts ATP.

The protein belongs to the anhydro-N-acetylmuramic acid kinase family.

The catalysed reaction is 1,6-anhydro-N-acetyl-beta-muramate + ATP + H2O = N-acetyl-D-muramate 6-phosphate + ADP + H(+). It functions in the pathway amino-sugar metabolism; 1,6-anhydro-N-acetylmuramate degradation. Its pathway is cell wall biogenesis; peptidoglycan recycling. In terms of biological role, catalyzes the specific phosphorylation of 1,6-anhydro-N-acetylmuramic acid (anhMurNAc) with the simultaneous cleavage of the 1,6-anhydro ring, generating MurNAc-6-P. Is required for the utilization of anhMurNAc either imported from the medium or derived from its own cell wall murein, and thus plays a role in cell wall recycling. This chain is Anhydro-N-acetylmuramic acid kinase, found in Shewanella baltica (strain OS185).